The following is a 169-amino-acid chain: Cell division inhibitor SulA (169 aa).

A ftsZ binding region spans residues 106-112 (ALRTGNY). The interval 162-169 (KIHSNLYH) is lon protease binding.

The protein belongs to the SulA family. As to quaternary structure, interacts with FtsZ. Is rapidly cleaved and degraded by the Lon protease once DNA damage is repaired.

Functionally, component of the SOS system and an inhibitor of cell division. Accumulation of SulA causes rapid cessation of cell division and the appearance of long, non-septate filaments. In the presence of GTP, binds a polymerization-competent form of FtsZ in a 1:1 ratio, thus inhibiting FtsZ polymerization and therefore preventing it from participating in the assembly of the Z ring. This mechanism prevents the premature segregation of damaged DNA to daughter cells during cell division. This is Cell division inhibitor SulA from Escherichia coli O7:K1 (strain IAI39 / ExPEC).